The chain runs to 690 residues: Elongation factor G (690 aa).

One can recognise a tr-type G domain in the interval 8-283 (EDYRNFGIMA…AVVDYLPSPV (276 aa)). Residues 17 to 24 (AHIDAGKT), 81 to 85 (DTPGH), and 135 to 138 (NKMD) contribute to the GTP site.

Belongs to the TRAFAC class translation factor GTPase superfamily. Classic translation factor GTPase family. EF-G/EF-2 subfamily.

It is found in the cytoplasm. Catalyzes the GTP-dependent ribosomal translocation step during translation elongation. During this step, the ribosome changes from the pre-translocational (PRE) to the post-translocational (POST) state as the newly formed A-site-bound peptidyl-tRNA and P-site-bound deacylated tRNA move to the P and E sites, respectively. Catalyzes the coordinated movement of the two tRNA molecules, the mRNA and conformational changes in the ribosome. The polypeptide is Elongation factor G (Rhodopseudomonas palustris (strain BisB5)).